A 207-amino-acid polypeptide reads, in one-letter code: 2,3-bisphosphoglycerate-dependent phosphoglycerate mutase (207 aa).

Substrate is bound by residues 10 to 17 (RHGQSEWN), 23 to 24 (TG), R62, 89 to 92 (ERDY), K100, 116 to 117 (RR), and 160 to 161 (GN). Catalysis depends on H11, which acts as the Tele-phosphohistidine intermediate. E89 acts as the Proton donor/acceptor in catalysis.

It belongs to the phosphoglycerate mutase family. BPG-dependent PGAM subfamily. In terms of assembly, homodimer.

It carries out the reaction (2R)-2-phosphoglycerate = (2R)-3-phosphoglycerate. It participates in carbohydrate degradation; glycolysis; pyruvate from D-glyceraldehyde 3-phosphate: step 3/5. In terms of biological role, catalyzes the interconversion of 2-phosphoglycerate and 3-phosphoglycerate. The chain is 2,3-bisphosphoglycerate-dependent phosphoglycerate mutase from Bradyrhizobium sp. (strain BTAi1 / ATCC BAA-1182).